A 364-amino-acid polypeptide reads, in one-letter code: Molybdenum import ATP-binding protein ModC (364 aa).

The region spanning 1-229 is the ABC transporter domain; the sequence is MLLIDIKKQL…PLMRPWLNAS (229 aa). Position 31 to 38 (31 to 38) interacts with ATP; that stretch reads GRSGAGKS. The region spanning 293-360 is the Mop domain; sequence HSSIRNILPV…IKGVSVTQSD (68 aa).

This sequence belongs to the ABC transporter superfamily. Molybdate importer (TC 3.A.1.8) family. As to quaternary structure, the complex is composed of two ATP-binding proteins (ModC), two transmembrane proteins (ModB) and a solute-binding protein (ModA).

It localises to the cell inner membrane. The enzyme catalyses molybdate(out) + ATP + H2O = molybdate(in) + ADP + phosphate + H(+). In terms of biological role, part of the ABC transporter complex ModABC involved in molybdenum import. Responsible for energy coupling to the transport system. This chain is Molybdenum import ATP-binding protein ModC, found in Aliivibrio fischeri (strain ATCC 700601 / ES114) (Vibrio fischeri).